A 236-amino-acid chain; its full sequence is 5'-methylthioadenosine/S-adenosylhomocysteine nucleosidase (236 aa).

Catalysis depends on Glu-12, which acts as the Proton acceptor. Substrate is bound by residues Gly-78, Ile-153, and Met-174 to Glu-175. The active-site Proton donor is the Asp-198.

Belongs to the PNP/UDP phosphorylase family. MtnN subfamily.

It carries out the reaction S-adenosyl-L-homocysteine + H2O = S-(5-deoxy-D-ribos-5-yl)-L-homocysteine + adenine. The enzyme catalyses S-methyl-5'-thioadenosine + H2O = 5-(methylsulfanyl)-D-ribose + adenine. It catalyses the reaction 5'-deoxyadenosine + H2O = 5-deoxy-D-ribose + adenine. It participates in amino-acid biosynthesis; L-methionine biosynthesis via salvage pathway; S-methyl-5-thio-alpha-D-ribose 1-phosphate from S-methyl-5'-thioadenosine (hydrolase route): step 1/2. Functionally, catalyzes the irreversible cleavage of the glycosidic bond in both 5'-methylthioadenosine (MTA) and S-adenosylhomocysteine (SAH/AdoHcy) to adenine and the corresponding thioribose, 5'-methylthioribose and S-ribosylhomocysteine, respectively. Also cleaves 5'-deoxyadenosine, a toxic by-product of radical S-adenosylmethionine (SAM) enzymes, into 5-deoxyribose and adenine. The chain is 5'-methylthioadenosine/S-adenosylhomocysteine nucleosidase from Shewanella baltica (strain OS223).